We begin with the raw amino-acid sequence, 1449 residues long: Gag-Pol polyprotein (1449 aa).

Glycine 2 is lipidated: N-myristoyl glycine; by host. The Nuclear export signal motif lies at 16 to 22; sequence LEKVRLR. The Nuclear localization signal signature appears at 26-32; the sequence is KKKYMLK. The tract at residues 215-237 is disordered; that stretch reads DLQHPQPGPLPAGQLREPRGSDI. CCHC-type zinc fingers lie at residues 392–409 and 413–430; these read IKCWNCGKEGHSAKQCRA and QGCWKCGKTGHVMAKCPE. Residues 442-494 form a disordered region; it reads GKEAPQFPHGPDASGADTNCSPRGSSCGSTEELHEDGQKAEGEQRETLQGGDR. Polar residues predominate over residues 457–470; it reads ADTNCSPRGSSCGS. Over residues 472-487 the composition is skewed to basic and acidic residues; it reads EELHEDGQKAEGEQRE. A Peptidase A2 domain is found at 518–587; the sequence is VEVLLDTGAD…TPINIFGRNL (70 aa). The For protease activity; shared with dimeric partner role is filled by aspartate 523. Positions 641–831 constitute a Reverse transcriptase domain; that stretch reads DGQLEEAPPT…PPFQWMGYEL (191 aa). Residues aspartate 707, aspartate 782, and aspartate 783 each coordinate Mg(2+). Residues 824 to 832 form an RT 'primer grip' region; it reads FQWMGYELW. Positions 994-1010 match the Tryptophan repeat motif motif; that stretch reads WEQWWTDYWQVTWIPDW. In terms of domain architecture, RNase H type-1 spans 1030 to 1153; that stretch reads IQGAETFYVD…VDHLVSQGIR (124 aa). The Mg(2+) site is built by aspartate 1039, glutamate 1074, aspartate 1094, and aspartate 1145. Residues 1159-1200 form an Integrase-type zinc finger; the sequence is KKIEPAQEEHEKYHSNVKELVFKFGLPRLVAKQIVDTCDKCH. Histidine 1168, histidine 1172, cysteine 1196, and cysteine 1199 together coordinate Zn(2+). The region spanning 1210–1360 is the Integrase catalytic domain; the sequence is VNAELGTWQM…TPAERLVNMI (151 aa). Mg(2+) contacts are provided by aspartate 1220 and aspartate 1272. Positions 1379–1426 form a DNA-binding region, integrase-type; sequence FRVYYREGRDQLWKGPGELLWKGEGAVILKVGTEIKVVPRRKAKIIKD.

In terms of assembly, homotrimer. Interacts with gp41 (via C-terminus). As to quaternary structure, homodimer. The active site consists of two apposed aspartic acid residues. Heterodimer of p66 RT and p51 RT (RT p66/p51). Heterodimerization of RT is essential for DNA polymerase activity. Despite the sequence identities, p66 RT and p51 RT have distinct folding. In terms of assembly, homotetramer; may further associate as a homohexadecamer. It depends on Mg(2+) as a cofactor. In terms of processing, specific enzymatic cleavages by the viral protease yield mature proteins. The protease is released by autocatalytic cleavage. The polyprotein is cleaved during and after budding, this process is termed maturation. Proteolytic cleavage of p66 RT removes the RNase H domain to yield the p51 RT subunit. Capsid protein p24 is phosphorylated.

It localises to the virion. It is found in the host nucleus. The protein localises to the host cytoplasm. The protein resides in the host cell membrane. The catalysed reaction is Specific for a P1 residue that is hydrophobic, and P1' variable, but often Pro.. It catalyses the reaction Endohydrolysis of RNA in RNA/DNA hybrids. Three different cleavage modes: 1. sequence-specific internal cleavage of RNA. Human immunodeficiency virus type 1 and Moloney murine leukemia virus enzymes prefer to cleave the RNA strand one nucleotide away from the RNA-DNA junction. 2. RNA 5'-end directed cleavage 13-19 nucleotides from the RNA end. 3. DNA 3'-end directed cleavage 15-20 nucleotides away from the primer terminus.. It carries out the reaction 3'-end directed exonucleolytic cleavage of viral RNA-DNA hybrid.. The enzyme catalyses DNA(n) + a 2'-deoxyribonucleoside 5'-triphosphate = DNA(n+1) + diphosphate. The viral protease is inhibited by many synthetic protease inhibitors (PIs), such as amprenavir, atazanavir, indinavir, loprinavir, nelfinavir, ritonavir and saquinavir. RT can be inhibited either by nucleoside RT inhibitors (NRTIs) or by non nucleoside RT inhibitors (NNRTIs). NRTIs act as chain terminators, whereas NNRTIs inhibit DNA polymerization by binding a small hydrophobic pocket near the RT active site and inducing an allosteric change in this region. Classical NRTIs are abacavir, adefovir (PMEA), didanosine (ddI), lamivudine (3TC), stavudine (d4T), tenofovir (PMPA), zalcitabine (ddC), and zidovudine (AZT). Classical NNRTIs are atevirdine (BHAP U-87201E), delavirdine, efavirenz (DMP-266), emivirine (I-EBU), and nevirapine (BI-RG-587). The tritherapies used as a basic effective treatment of AIDS associate two NRTIs and one NNRTI. Use of protease inhibitors in tritherapy regimens permit more ambitious therapeutic strategies. In terms of biological role, gag-Pol polyprotein and Gag polyprotein may regulate their own translation, by the binding genomic RNA in the 5'-UTR. At low concentration, Gag-Pol and Gag would promote translation, whereas at high concentration, the polyproteins encapsidate genomic RNA and then shut off translation. Its function is as follows. Matrix protein p17 has two main functions: in infected cell, it targets Gag and Gag-pol polyproteins to the plasma membrane via a multipartite membrane-binding signal, that includes its myristointegration complex. The myristoylation signal and the NLS exert conflicting influences its subcellular localization. The key regulation of these motifs might be phosphorylation of a portion of MA molecules on the C-terminal tyrosine at the time of virus maturation, by virion-associated cellular tyrosine kinase. Implicated in the release from host cell mediated by Vpu. Capsid protein p24 forms the conical core that encapsulates the genomic RNA-nucleocapsid complex in the virion. The core is constituted by capsid protein hexamer subunits. The core is disassembled soon after virion entry. Interaction with host PPIA/CYPA protects the virus from restriction by host TRIM5-alpha and from an unknown antiviral activity in host cells. This capsid restriction by TRIM5 is one of the factors which restricts SIV to the simian species. Functionally, nucleocapsid protein p7 encapsulates and protects viral dimeric unspliced (genomic) RNA. Binds these RNAs through its zinc fingers. Facilitates rearangement of nucleic acid secondary structure during retrotranscription of genomic RNA. This capability is referred to as nucleic acid chaperone activity. In terms of biological role, the aspartyl protease mediates proteolytic cleavages of Gag and Gag-Pol polyproteins during or shortly after the release of the virion from the plasma membrane. Cleavages take place as an ordered, step-wise cascade to yield mature proteins. This process is called maturation. Displays maximal activity during the budding process just prior to particle release from the cell. Also cleaves Nef and Vif, probably concomitantly with viral structural proteins on maturation of virus particles. Hydrolyzes host EIF4GI and PABP1 in order to shut off the capped cellular mRNA translation. The resulting inhibition of cellular protein synthesis serves to ensure maximal viral gene expression and to evade host immune response. Its function is as follows. Reverse transcriptase/ribonuclease H (RT) is a multifunctional enzyme that converts the viral dimeric RNA genome into dsDNA in the cytoplasm, shortly after virus entry into the cell. This enzyme displays a DNA polymerase activity that can copy either DNA or RNA templates, and a ribonuclease H (RNase H) activity that cleaves the RNA strand of RNA-DNA heteroduplexes in a partially processive 3' to 5' endonucleasic mode. Conversion of viral genomic RNA into dsDNA requires many steps. A tRNA binds to the primer-binding site (PBS) situated at the 5'-end of the viral RNA. RT uses the 3' end of the tRNA primer to perform a short round of RNA-dependent minus-strand DNA synthesis. The reading proceeds through the U5 region and ends after the repeated (R) region which is present at both ends of viral RNA. The portion of the RNA-DNA heteroduplex is digested by the RNase H, resulting in a ssDNA product attached to the tRNA primer. This ssDNA/tRNA hybridizes with the identical R region situated at the 3' end of viral RNA. This template exchange, known as minus-strand DNA strong stop transfer, can be either intra- or intermolecular. RT uses the 3' end of this newly synthesized short ssDNA to perform the RNA-dependent minus-strand DNA synthesis of the whole template. RNase H digests the RNA template except for two polypurine tracts (PPTs) situated at the 5'-end and near the center of the genome. It is not clear if both polymerase and RNase H activities are simultaneous. RNase H can probably proceed both in a polymerase-dependent (RNA cut into small fragments by the same RT performing DNA synthesis) and a polymerase-independent mode (cleavage of remaining RNA fragments by free RTs). Secondly, RT performs DNA-directed plus-strand DNA synthesis using the PPTs that have not been removed by RNase H as primers. PPTs and tRNA primers are then removed by RNase H. The 3' and 5' ssDNA PBS regions hybridize to form a circular dsDNA intermediate. Strand displacement synthesis by RT to the PBS and PPT ends produces a blunt ended, linear dsDNA copy of the viral genome that includes long terminal repeats (LTRs) at both ends. Integrase catalyzes viral DNA integration into the host chromosome, by performing a series of DNA cutting and joining reactions. This enzyme activity takes place after virion entry into a cell and reverse transcription of the RNA genome in dsDNA. The first step in the integration process is 3' processing. This step requires a complex comprising the viral genome, matrix protein, Vpr and integrase. This complex is called the pre-integration complex (PIC). The integrase protein removes 2 nucleotides from each 3' end of the viral DNA, leaving recessed CA OH's at the 3' ends. In the second step, the PIC enters cell nucleus. This process is mediated through integrase and Vpr proteins, and allows the virus to infect a non dividing cell. This ability to enter the nucleus is specific of lentiviruses, other retroviruses cannot and rely on cell division to access cell chromosomes. In the third step, termed strand transfer, the integrase protein joins the previously processed 3' ends to the 5' ends of strands of target cellular DNA at the site of integration. The 5'-ends are produced by integrase-catalyzed staggered cuts, 5 bp apart. A Y-shaped, gapped, recombination intermediate results, with the 5'-ends of the viral DNA strands and the 3' ends of target DNA strands remaining unjoined, flanking a gap of 5 bp. The last step is viral DNA integration into host chromosome. This involves host DNA repair synthesis in which the 5 bp gaps between the unjoined strands are filled in and then ligated. Since this process occurs at both cuts flanking the SIV genome, a 5 bp duplication of host DNA is produced at the ends of SIV integration. Alternatively, Integrase may catalyze the excision of viral DNA just after strand transfer, this is termed disintegration. The chain is Gag-Pol polyprotein (gag-pol) from Cercopithecidae (Old World monkeys).